The sequence spans 635 residues: Probable potassium transport system protein Kup (635 aa).

Helical transmembrane passes span 22 to 42, 59 to 79, 111 to 131, 148 to 168, 180 to 200, 216 to 236, 259 to 279, 297 to 317, 349 to 369, 378 to 398, 404 to 424, and 428 to 448; these read LVIG…LYTL, VLGI…LKYV, MYVV…DGVI, APKL…MLFL, AFGP…VYNM, VLFF…VVLA, WQFV…ALVL, ALYP…QALI, IYVP…VVGF, AYGV…VIYA, VPAP…CAFF, and IIKF…LFTL.

The protein belongs to the HAK/KUP transporter (TC 2.A.72) family.

It localises to the cell inner membrane. It carries out the reaction K(+)(in) + H(+)(in) = K(+)(out) + H(+)(out). In terms of biological role, transport of potassium into the cell. Likely operates as a K(+):H(+) symporter. The sequence is that of Probable potassium transport system protein Kup from Xanthomonas oryzae pv. oryzae (strain KACC10331 / KXO85).